The primary structure comprises 355 residues: NADH-quinone oxidoreductase subunit H (355 aa).

The next 8 helical transmembrane spans lie at 25-45, 91-111, 126-146, 170-190, 205-225, 253-273, 290-310, and 330-350; these read VVRI…LILW, WLYL…WAVI, LLYA…AGWA, MGFA…SEIV, FLSW…ISGI, MAFA…SALA, FIPG…VFIW, and VFLP…MSPL.

The protein belongs to the complex I subunit 1 family. As to quaternary structure, NDH-1 is composed of 14 different subunits. Subunits NuoA, H, J, K, L, M, N constitute the membrane sector of the complex.

The protein localises to the cell inner membrane. It catalyses the reaction a quinone + NADH + 5 H(+)(in) = a quinol + NAD(+) + 4 H(+)(out). In terms of biological role, NDH-1 shuttles electrons from NADH, via FMN and iron-sulfur (Fe-S) centers, to quinones in the respiratory chain. The immediate electron acceptor for the enzyme in this species is believed to be ubiquinone. Couples the redox reaction to proton translocation (for every two electrons transferred, four hydrogen ions are translocated across the cytoplasmic membrane), and thus conserves the redox energy in a proton gradient. This subunit may bind ubiquinone. This is NADH-quinone oxidoreductase subunit H from Burkholderia cenocepacia (strain ATCC BAA-245 / DSM 16553 / LMG 16656 / NCTC 13227 / J2315 / CF5610) (Burkholderia cepacia (strain J2315)).